A 299-amino-acid chain; its full sequence is Oxygen-dependent coproporphyrinogen-III oxidase (299 aa).

A substrate-binding site is contributed by serine 92. The a divalent metal cation site is built by histidine 96 and histidine 106. Histidine 106 (proton donor) is an active-site residue. 108–110 (NVR) provides a ligand contact to substrate. 2 residues coordinate a divalent metal cation: histidine 145 and histidine 175. Positions 240 to 275 (YVEFNLVWDRGTLFGLQTGGRTESILMSMPPLVRWE) are important for dimerization. 258–260 (GGR) contributes to the substrate binding site.

This sequence belongs to the aerobic coproporphyrinogen-III oxidase family. In terms of assembly, homodimer. A divalent metal cation serves as cofactor.

Its subcellular location is the cytoplasm. It carries out the reaction coproporphyrinogen III + O2 + 2 H(+) = protoporphyrinogen IX + 2 CO2 + 2 H2O. It participates in porphyrin-containing compound metabolism; protoporphyrin-IX biosynthesis; protoporphyrinogen-IX from coproporphyrinogen-III (O2 route): step 1/1. Functionally, involved in the heme biosynthesis. Catalyzes the aerobic oxidative decarboxylation of propionate groups of rings A and B of coproporphyrinogen-III to yield the vinyl groups in protoporphyrinogen-IX. The chain is Oxygen-dependent coproporphyrinogen-III oxidase from Shigella flexneri.